Consider the following 440-residue polypeptide: MMDDKTKNDQQESNEDKDELELFTRNTSKKRRQRKRSKATHFSNQNKDDTSQQADFDEEIYLINKDFKKEQGNEENNDSASSHANDNNIDDSTDSNIENEDYRYNQETDDQNESNGIAVDNEQHQSAPNEQNSDSNDEETVTKKERKSKVTQLKPLTLEEKRKVRRKRQKRIQYSVITILVLLIAVILIYMFSPLSKIAHVNINGNNHVSTSKINKVLGVKNDSRMYTFSKKNAINDLEEDPLIKSVEIHKQLPNTLNVDITENEIIALVKYKGKYLPLLENGKLLKGSNDVKINDAPVMDGFKGTKEDDMIKALSEMTPEVRRYIAEVTYAPSKNKQSRIELFTTDGLQVIGDISTISKKMKYYPQMSQSLARDSSGKLKTRGYIDLSVGASFIPYRGNTSTQSESDKNVTKSSQEENQAKEELQSVLNKINKQSSKNN.

Basic and acidic residues predominate over residues 1–10; that stretch reads MMDDKTKNDQ. Disordered regions lie at residues 1–97 and 123–154; these read MMDD…DSNI and QHQSAPNEQNSDSNDEETVTKKERKSKVTQLK. The Cytoplasmic portion of the chain corresponds to 1-174; that stretch reads MMDDKTKNDQ…RRKRQKRIQY (174 aa). A compositionally biased stretch (acidic residues) spans 12–21; it reads ESNEDKDELE. Positions 27-39 are enriched in basic residues; that stretch reads TSKKRRQRKRSKA. Residues 78 to 87 are compositionally biased toward low complexity; it reads DSASSHANDN. Acidic residues predominate over residues 88 to 97; it reads NIDDSTDSNI. Residues 124–134 are compositionally biased toward polar residues; sequence HQSAPNEQNSD. The chain crosses the membrane as a helical span at residues 175 to 195; the sequence is SVITILVLLIAVILIYMFSPL. The 69-residue stretch at 196–264 folds into the POTRA domain; that stretch reads SKIAHVNING…NTLNVDITEN (69 aa). Topologically, residues 196–440 are extracellular; the sequence is SKIAHVNING…KINKQSSKNN (245 aa). The disordered stretch occupies residues 397 to 440; sequence YRGNTSTQSESDKNVTKSSQEENQAKEELQSVLNKINKQSSKNN. Residues 406–425 are compositionally biased toward basic and acidic residues; that stretch reads ESDKNVTKSSQEENQAKEEL. Polar residues predominate over residues 427–440; it reads SVLNKINKQSSKNN.

This sequence belongs to the FtsQ/DivIB family. DivIB subfamily.

Its subcellular location is the cell membrane. Its function is as follows. Cell division protein that may be involved in stabilizing or promoting the assembly of the division complex. The protein is Cell division protein DivIB of Staphylococcus aureus (strain MRSA252).